Here is a 279-residue protein sequence, read N- to C-terminus: MLDISNTTWDLSNQSVLQPLWDYLQQNHESSLRSPLFPVILSVSMYLVLVFFYTVLDLLAPTWPSIRRYQIHQDRTVTWSNIGSTLALTTYNHLLYIFPAAVAQWLWRPPIPLPREAPTLTAFLLGIVGCTVVFDFQYYLWHLLHHRVGWLYRTFHALHHQYRQTFSLVTQYLSAWELFSVGFWTTVDPLLLQCHCLTAWAFMLFNIWVSTEDHCGYDFPWAMHRLVPFGLWGGALRHDAHHQLPGTNFAPFFAHWDWLGGTATMPAPVKTKKRDDKEA.

2 N-linked (GlcNAc...) asparagine glycosylation sites follow: Asn6 and Asn13. 3 consecutive transmembrane segments span residues 36 to 56 (LFPVILSVSMYLVLVFFYTVL), 86 to 106 (LALTTYNHLLYIFPAAVAQWL), and 120 to 140 (LTAFLLGIVGCTVVFDFQYYL). The Fatty acid hydroxylase domain maps to 128–262 (VGCTVVFDFQ…FAHWDWLGGT (135 aa)). The short motif at 141-145 (WHLLH) is the Histidine box-1 element. The short motif at 156–160 (HALHH) is the Histidine box-2 element. 2 consecutive transmembrane segments span residues 165 to 185 (TFSLVTQYLSAWELFSVGFWT) and 189 to 209 (PLLLQCHCLTAWAFMLFNIWV). A Histidine box-3 motif is present at residues 237 to 243 (RHDAHHQ).

It belongs to the sterol desaturase family. The cofactor is Fe cation.

It localises to the endoplasmic reticulum membrane. In terms of biological role, may catalyze the formation of 25-hydroxycholesterol from cholesterol. This is Cholesterol 25-hydroxylase-like protein 2 from Danio rerio (Zebrafish).